Here is a 391-residue protein sequence, read N- to C-terminus: MCTSANNRLDQLTQILHPENLLNPTNASHPESSLRPDHPFKIAVVGSGNWGTTIAKIVSENAVARPHLFSHFVNMWVFEEKIDGTNLTEIINTRHENIKYLPGVKLPKNLIAVPDIVKAVKGADLIVFNLPHQFLPRILKQLKGHVPKTTRAISCLKGLEVNANGCKLLSTVIEEELGIACGALSGANLAPEIARGNWSETTVAYRVPADYRGPGKDIDKLVLKALFHRPYFHVNVIDDVAGVSIAGALKNVVALAVGFVEGLGWGDNAKAAVMRVGLLETIKFAKLFFNDAEIDTFTGESAGVADLITTCSGGRNVKVGRYMAETGCAAEEAEKKLLNGQSSQGIVTTKEVHEFLTNVNKLEEFPLFEATYQITFGSESIENLPNLLNNY.

NAD(+)-binding positions include 46 to 51 (GSGNWG), Phe-78, and Phe-134. Residue Lys-157 participates in substrate binding. Ala-190 provides a ligand contact to NAD(+). The Proton acceptor role is filled by Lys-250. Residues Arg-315 and Gln-344 each contribute to the NAD(+) site. 315 to 316 (RN) lines the substrate pocket.

The protein belongs to the NAD-dependent glycerol-3-phosphate dehydrogenase family.

It carries out the reaction sn-glycerol 3-phosphate + NAD(+) = dihydroxyacetone phosphate + NADH + H(+). This chain is Glycerol-3-phosphate dehydrogenase [NAD(+)] (GPD), found in Candida tropicalis (Yeast).